Reading from the N-terminus, the 231-residue chain is GrpE protein homolog, mitochondrial (231 aa).

The tract at residues 49–71 (SEKAGEKAEEKAEEQNLSAEEQK) is disordered.

The protein belongs to the GrpE family. In terms of assembly, component of the PAM complex, at least composed of mtHsp70, MGE1, TIM44, PAM16, PAM17 and PAM18.

It is found in the mitochondrion matrix. Functionally, essential component of the PAM complex, a complex required for the translocation of transit peptide-containing proteins from the inner membrane into the mitochondrial matrix in an ATP-dependent manner. Seems to control the nucleotide-dependent binding of SSC1 to substrate proteins. The sequence is that of GrpE protein homolog, mitochondrial (mge1) from Candida glabrata (strain ATCC 2001 / BCRC 20586 / JCM 3761 / NBRC 0622 / NRRL Y-65 / CBS 138) (Yeast).